The primary structure comprises 439 residues: Nuclear hormone receptor family member nhr-97 (439 aa).

Polar residues predominate over residues 1-13 (MSGDAQPSSNQRA). Positions 1 to 22 (MSGDAQPSSNQRATEARPPPSP) are disordered. The nuclear receptor DNA-binding region spans 32-108 (GALCVVCGDR…VGMKIEAVKM (77 aa)). NR C4-type zinc fingers lie at residues 35 to 56 (CVVC…CHGC) and 72 to 96 (CRYG…FHRC). The interval 112 to 135 (LTKRKKEKTDEDDTDDGGSHESFE) is disordered. The 236-residue stretch at 173–408 (FVQPSLQNLL…GEGLLFWQLY (236 aa)) folds into the NR LBD domain.

The protein belongs to the nuclear hormone receptor family.

It is found in the nucleus. Its function is as follows. Orphan nuclear receptor. This chain is Nuclear hormone receptor family member nhr-97 (nhr-97), found in Caenorhabditis elegans.